The following is a 289-amino-acid chain: Lipoyl synthase 2 (289 aa).

Residues Cys-43, Cys-48, Cys-54, Cys-69, Cys-73, Cys-76, and Ser-282 each contribute to the [4Fe-4S] cluster site. The Radical SAM core domain maps to 55 to 271 (YAQKTATFLL…GAVARDLGFA (217 aa)).

This sequence belongs to the radical SAM superfamily. Lipoyl synthase family. It depends on [4Fe-4S] cluster as a cofactor.

It is found in the cytoplasm. It carries out the reaction [[Fe-S] cluster scaffold protein carrying a second [4Fe-4S](2+) cluster] + N(6)-octanoyl-L-lysyl-[protein] + 2 oxidized [2Fe-2S]-[ferredoxin] + 2 S-adenosyl-L-methionine + 4 H(+) = [[Fe-S] cluster scaffold protein] + N(6)-[(R)-dihydrolipoyl]-L-lysyl-[protein] + 4 Fe(3+) + 2 hydrogen sulfide + 2 5'-deoxyadenosine + 2 L-methionine + 2 reduced [2Fe-2S]-[ferredoxin]. It participates in protein modification; protein lipoylation via endogenous pathway; protein N(6)-(lipoyl)lysine from octanoyl-[acyl-carrier-protein]: step 2/2. Functionally, catalyzes the radical-mediated insertion of two sulfur atoms into the C-6 and C-8 positions of the octanoyl moiety bound to the lipoyl domains of lipoate-dependent enzymes, thereby converting the octanoylated domains into lipoylated derivatives. This is Lipoyl synthase 2 from Gloeobacter violaceus (strain ATCC 29082 / PCC 7421).